The sequence spans 278 residues: Large ribosomal subunit protein uL2 (278 aa).

Disordered stretches follow at residues 29–57 and 224–278; these read PEKS…QGGG and VAMN…NKKR. The span at 258–278 shows a compositional bias: basic residues; sequence RSPKKASNKYIVRRRKTNKKR.

The protein belongs to the universal ribosomal protein uL2 family. As to quaternary structure, part of the 50S ribosomal subunit. Forms a bridge to the 30S subunit in the 70S ribosome.

Functionally, one of the primary rRNA binding proteins. Required for association of the 30S and 50S subunits to form the 70S ribosome, for tRNA binding and peptide bond formation. It has been suggested to have peptidyltransferase activity; this is somewhat controversial. Makes several contacts with the 16S rRNA in the 70S ribosome. This is Large ribosomal subunit protein uL2 from Streptomyces griseus subsp. griseus (strain JCM 4626 / CBS 651.72 / NBRC 13350 / KCC S-0626 / ISP 5235).